We begin with the raw amino-acid sequence, 116 residues long: Iron-sulfur cluster insertion protein ErpA (116 aa).

Positions 44, 108, and 110 each coordinate iron-sulfur cluster.

Belongs to the HesB/IscA family. Homodimer. It depends on iron-sulfur cluster as a cofactor.

Functionally, required for insertion of 4Fe-4S clusters for at least IspG. This Aeromonas salmonicida (strain A449) protein is Iron-sulfur cluster insertion protein ErpA.